The primary structure comprises 206 residues: Thiamine-phosphate synthase (206 aa).

4-amino-2-methyl-5-(diphosphooxymethyl)pyrimidine contacts are provided by residues 38–42 (QLRAK) and Asn-70. Mg(2+) is bound by residues Asp-71 and Asp-90. Ser-107 serves as a coordination point for 4-amino-2-methyl-5-(diphosphooxymethyl)pyrimidine. 133–135 (TTT) contributes to the 2-[(2R,5Z)-2-carboxy-4-methylthiazol-5(2H)-ylidene]ethyl phosphate binding site. Residue Lys-136 coordinates 4-amino-2-methyl-5-(diphosphooxymethyl)pyrimidine. 2-[(2R,5Z)-2-carboxy-4-methylthiazol-5(2H)-ylidene]ethyl phosphate contacts are provided by residues Gly-164 and 184-185 (VS).

The protein belongs to the thiamine-phosphate synthase family. The cofactor is Mg(2+).

The enzyme catalyses 2-[(2R,5Z)-2-carboxy-4-methylthiazol-5(2H)-ylidene]ethyl phosphate + 4-amino-2-methyl-5-(diphosphooxymethyl)pyrimidine + 2 H(+) = thiamine phosphate + CO2 + diphosphate. It carries out the reaction 2-(2-carboxy-4-methylthiazol-5-yl)ethyl phosphate + 4-amino-2-methyl-5-(diphosphooxymethyl)pyrimidine + 2 H(+) = thiamine phosphate + CO2 + diphosphate. It catalyses the reaction 4-methyl-5-(2-phosphooxyethyl)-thiazole + 4-amino-2-methyl-5-(diphosphooxymethyl)pyrimidine + H(+) = thiamine phosphate + diphosphate. Its pathway is cofactor biosynthesis; thiamine diphosphate biosynthesis; thiamine phosphate from 4-amino-2-methyl-5-diphosphomethylpyrimidine and 4-methyl-5-(2-phosphoethyl)-thiazole: step 1/1. Its function is as follows. Condenses 4-methyl-5-(beta-hydroxyethyl)thiazole monophosphate (THZ-P) and 2-methyl-4-amino-5-hydroxymethyl pyrimidine pyrophosphate (HMP-PP) to form thiamine monophosphate (TMP). This is Thiamine-phosphate synthase from Herpetosiphon aurantiacus (strain ATCC 23779 / DSM 785 / 114-95).